The primary structure comprises 415 residues: D-threonate kinase (415 aa).

Residues Asp9, Arg53, and 81–84 (KIDS) each bind substrate. Residues Ser251, 345 to 348 (GGET), and Gly392 each bind ATP.

It belongs to the four-carbon acid sugar kinase family.

The enzyme catalyses D-threonate + ATP = 4-O-phospho-D-threonate + ADP + H(+). Catalyzes the ATP-dependent phosphorylation of D-threonate to D-threonate 4-phosphate. Can also phosphorylate 4-hydroxy-L-threonine, with lower efficiency. The chain is D-threonate kinase from Cupriavidus necator (strain ATCC 17699 / DSM 428 / KCTC 22496 / NCIMB 10442 / H16 / Stanier 337) (Ralstonia eutropha).